The sequence spans 383 residues: Paralemmin-1 (383 aa).

Met1 is modified (N-acetylmethionine). A coiled-coil region spans residues 7-101 (DTVSQQERLQ…EKEIDVLEFG (95 aa)). 3 disordered regions span residues 51-164 (RERW…STMM), 242-293 (TLSE…QPGQ), and 333-374 (SVTP…DMKK). The span at 69 to 96 (DMRKQMQEDEQKARSLEESITRLEKEID) shows a compositional bias: basic and acidic residues. Residues Ser116, Ser122, and Ser124 each carry the phosphoserine modification. A compositionally biased stretch (polar residues) spans 133–143 (ETMVNAQQTPL). Phosphothreonine is present on residues Thr141, Thr145, and Thr153. Residues Ser157 and Ser161 each carry the phosphoserine modification. Phosphothreonine is present on Thr242. Ser244 carries the post-translational modification Phosphoserine. Over residues 257–273 (GLAEDVTRTTPSRREIT) the composition is skewed to basic and acidic residues. Ser345 is subject to Phosphoserine. The span at 357 to 367 (QTGPTTTPSDT) shows a compositional bias: polar residues. Phosphothreonine occurs at positions 361, 362, and 363. Position 365 is a phosphoserine (Ser365). A Phosphothreonine modification is found at Thr367. 2 S-palmitoyl cysteine lipidation sites follow: Cys377 and Cys379. At Cys380 the chain carries Cysteine methyl ester. Cys380 carries S-farnesyl cysteine lipidation. The propeptide at 381–383 (SVM) is removed in mature form.

The protein belongs to the paralemmin family. In terms of assembly, interacts with dopamine receptor DRD3. In terms of tissue distribution, expressed in neurons cells of neuropil-rich areas of the brain, in the Purkinje cells of the cerebellum, in cells of the cerebral cortex, hippocampus, brainstem nuclei and glial processes and sheaths. Expressed in the medulla of the adrenal chromaffin cells and renal duct cells (at protein level).

The protein localises to the cell membrane. It localises to the cell projection. Its subcellular location is the filopodium membrane. It is found in the axon. The protein resides in the dendrite. The protein localises to the dendritic spine. It localises to the basolateral cell membrane. Its subcellular location is the apicolateral cell membrane. Its function is as follows. Involved in plasma membrane dynamics and cell process formation. Necessary for axonal and dendritic filopodia induction, for dendritic spine maturation and synapse formation in a palmitoylation-dependent manner. This Rattus norvegicus (Rat) protein is Paralemmin-1 (Palm).